A 185-amino-acid polypeptide reads, in one-letter code: Elongation factor P (185 aa).

It belongs to the elongation factor P family.

It is found in the cytoplasm. Its pathway is protein biosynthesis; polypeptide chain elongation. Functionally, involved in peptide bond synthesis. Stimulates efficient translation and peptide-bond synthesis on native or reconstituted 70S ribosomes in vitro. Probably functions indirectly by altering the affinity of the ribosome for aminoacyl-tRNA, thus increasing their reactivity as acceptors for peptidyl transferase. This chain is Elongation factor P, found in Streptococcus uberis (strain ATCC BAA-854 / 0140J).